The following is a 208-amino-acid chain: Mitochondrial import inner membrane translocase subunit Tim23 (208 aa).

Transmembrane regions (helical) follow at residues 73-93 (FELA…FGTL), 125-145 (ASWA…GVAI), and 173-193 (GLKG…LYAL).

Belongs to the Tim17/Tim22/Tim23 family. Component of the TIM23 complex at least composed of timm23, timm17 and timm50. The complex interacts with the timm44 component of the PAM complex.

The protein localises to the mitochondrion inner membrane. Functionally, essential component of the TIM23 complex, a complex that mediates the translocation of transit peptide-containing proteins across the mitochondrial inner membrane. Plays an essential role in early embryonic development. The polypeptide is Mitochondrial import inner membrane translocase subunit Tim23 (timm23) (Danio rerio (Zebrafish)).